The chain runs to 194 residues: MVSRWEKLKNNPQTKSIGISIFLMMITRVIDFSRPSLLWPLRILYATVNIVQIGIFLYTKIIIEKKNDLTVLKYVEPATPMSGREHSKFVATTVRDYDLSKLLTSFKQMLVTIATTLFMHLYMGYAPPLLLQSVSAARGLFDNSEVQIHVQNKPAIDELRRPFKSSGGLLGSFGQVLTDKKSVDEAELTKLKPT.

The next 2 helical transmembrane spans lie at 43–63 and 110–130; these read ILYA…KIII and LVTI…PPLL.

It belongs to the PHO88 family.

The protein localises to the endoplasmic reticulum membrane. Functionally, may function in a SRP (signal recognition particle) and GET (guided entry of tail-anchored proteins) independent pathway for targeting a broad range of substrate proteins to the endoplasmic reticulum. Involved in inorganic phosphate uptake. Also involved in telomere length regulation and maintenance. This Schizosaccharomyces pombe (strain 972 / ATCC 24843) (Fission yeast) protein is SRP-independent targeting protein 3 homolog.